The sequence spans 1323 residues: MEDIELNSVDNLETKGGKEIKKKEKKIGYGGKKSPEENSNFLSNLTFSWADGFVIHCFRNVLQLSHLWDLASYDKSEYLAKKIAKSWEIEIQKPKPSYLRAGFRAFGKLHCISLFFYSIYVGSQFVGPEILSRMVTFVVESKLGTSTEDPNMGYYYALIMFGTAMIGSFCNYQANRVTVRTGDRLRSIIVLDVYKKAIKLSNSARSNTSPGQIVNLISNDAQRMIEVFGILNNGLFALPQIIICLALLYEKIGWPTFVGLGLMLAAIPFNGLAAKKLTETRRILIGHTDGRVKVTSEILQAMKIIKLYAWEDSFAKKVLDRRNNEIKLLFSFTRYRTILIAMIGAIPTAASILVFSTYYGYNGSLDAGKIFSALSYLNLLKIPLGFLPILIALGIQMQIASKRVTDFLLLPEMKEVQQIDNPSLPNGVYMKNSTTTWNKEKEDSFGLKNINFEAKGQSLTMVVGSVGSGKSTLVQAMLGELETIDGEIGIKGSIAYVPQQAWIINATLKENIIFGKELDEERYQKVLEVCALKRDIELFPQGDSVEIGERGINLSGGQKQRVSIARAVYSDADVYILDDPLSAVDSHVGKHLFHKCFKGILSSKTVILVANQINYLPFADNTVVLKSGEIVERGTYYELINAKLEFASLLQEYGVDENTKGDDSDDDDDKKDDDKKEEKVEKPKQSDKDGTLISEEEAEQGAVAGKVYWKYVTAGGGLLFLFAMILFLLETGSKTFTDWWLSHWQTESSERMESILLGEEPTGLTDDQNLGIYIGVGMASIIVTVVRTFSFFEYAVRAAHSIHHELFNALLKKPMSFFDQTPLGRIINRFTRDLDIIDNLIATSIAQFFTLMLSVLATLILISIIVPWLLIPLAPICILFFILQYFYRYTSRGLQRIEAITRSPIFNHFSETLNGVVSIRAYKKQQENILKNQKRLDDNNNCYLTLQAMNRWLGLRLDFLGNLIVFFSCIFITLKKDTISPSDVGLVLSYALSITSNLNQGVLQAADTETKMNSVERISQYIRGAVEAPQIIDDCRPSPDWPINGSIKFDNLVMRYREGLDPVLKGITCEIKAKEKIGIVGRTGAGKSSIVLALFRLIEASEGSISIDGENIAKFGLKDLRRNLAIIPQDPVLFSGTLRENLDPFNECPDHELWSILDDIQLSKVFKSTEEGLNSKVTENGENFSVGQRQLIVLARALLRKPKILVLDEATASVDGQSDSLIQATIRNKFSNCTILTIAHRLNTIMDSDKIMVLDAGKISEFDEPWTLLQNQNGLLTWLVNETGPQNAIYLRKLAEAKKSGLNINEITQIDQQNDNLNTPPRL.

Residues 110 to 396 (HCISLFFYSI…LPILIALGIQ (287 aa)) enclose the ABC transmembrane type-1 1 domain. The next 6 membrane-spanning stretches (helical) occupy residues 111 to 131 (CISL…PEIL), 152 to 172 (MGYY…FCNY), 227 to 247 (VFGI…CLAL), 252 to 272 (IGWP…FNGL), 338 to 358 (ILIA…FSTY), and 375 to 395 (SYLN…ALGI). The 225-residue stretch at 428 to 652 (VYMKNSTTTW…KLEFASLLQE (225 aa)) folds into the ABC transporter 1 domain. 464-471 (GSVGSGKS) is a binding site for ATP. The segment at 657–695 (ENTKGDDSDDDDDKKDDDKKEEKVEKPKQSDKDGTLISE) is disordered. Over residues 672–690 (DDDKKEEKVEKPKQSDKDG) the composition is skewed to basic and acidic residues. Helical transmembrane passes span 712-732 (VTAG…LETG), 772-792 (IYIG…FSFF), 840-860 (LIAT…ATLI), 862-882 (ISII…LFFI), and 952-972 (WLGL…CIFI). One can recognise an ABC transmembrane type-1 2 domain in the interval 720-1010 (FLFAMILFLL…GVLQAADTET (291 aa)). The ABC transporter 2 domain maps to 1047-1281 (IKFDNLVMRY…QNGLLTWLVN (235 aa)). 1081–1088 (GRTGAGKS) serves as a coordination point for ATP.

It belongs to the ABC transporter superfamily. ABCC family. Conjugate transporter (TC 3.A.1.208) subfamily.

It localises to the membrane. In Dictyostelium discoideum (Social amoeba), this protein is ABC transporter C family member 12 (abcC12).